Consider the following 62-residue polypeptide: MKAAELRKLSIDELKDKLAETRKELFDLRFKHATAQLEKTAEIPAAKHNVARILTILKEKGA.

The protein belongs to the universal ribosomal protein uL29 family.

The chain is Large ribosomal subunit protein uL29 from Oleidesulfovibrio alaskensis (strain ATCC BAA-1058 / DSM 17464 / G20) (Desulfovibrio alaskensis).